The following is a 628-amino-acid chain: MSFSEFYQRSINEPEQFWAEQARRIDWQTPFTQTLDHSNPPFARWFCEGRTNLCHNAIDRWLEKQPEALALIAVSSETEEERTFTFRQLHDEVNAVASMLRSLGVQRGDRVLVYMPMIAEAHITLLACARIGAIHSVVFGGFASHSVAARIDDAKPVLIVSADAGARGGKIIPYKKLLDDAISQAQHQPRHVLLVDRGLAKMARVSGRDVDFASLRHQHIGARVPVAWLESNETSCILYTSGTTGKPKGVQRDVGGYAVALATSMDTIFGGKAGSVFFCASDIGWVVGHSYIVYAPLLAGMATIVYEGLPTWPDCGVWWTIVEKYQVSRMFSAPTAIRVLKKFPTAEIRKHDLSSLEVLYLAGEPLDEPTASWVSNTLDVPVIDNYWQTESGWPIMAIARGLDDRPTRLGSPGVPMYGYNVQLLNEVTGEPCGVNEKGMLVVEGPLPPGCIQTIWGDDGRFVKTYWSLFSRPVYATFDWGIRDADGYHFILGRTDDVINVAGHRLGTREIEESISSHPGVAEVAVVGVKDALKGQVAVAFVIPKESDSLEDRDVAHSQEKAIMALVDSQIGNFGRPAHVWFVSQLPKTRSGKMLRRTIQAICEGRDPGDLTTIDDPASLDQIRQAMEE.

It belongs to the ATP-dependent AMP-binding enzyme family.

The enzyme catalyses propanoate + ATP + CoA = propanoyl-CoA + AMP + diphosphate. The protein operates within organic acid metabolism; propanoate degradation. Catalyzes the synthesis of propionyl-CoA from propionate and CoA. Also converts acetate to acetyl-CoA but with a lower specific activity. The sequence is that of Propionate--CoA ligase (prpE) from Escherichia coli (strain K12).